The following is a 95-amino-acid chain: Aspartyl/glutamyl-tRNA(Asn/Gln) amidotransferase subunit C (95 aa).

Belongs to the GatC family. In terms of assembly, heterotrimer of A, B and C subunits.

The catalysed reaction is L-glutamyl-tRNA(Gln) + L-glutamine + ATP + H2O = L-glutaminyl-tRNA(Gln) + L-glutamate + ADP + phosphate + H(+). The enzyme catalyses L-aspartyl-tRNA(Asn) + L-glutamine + ATP + H2O = L-asparaginyl-tRNA(Asn) + L-glutamate + ADP + phosphate + 2 H(+). In terms of biological role, allows the formation of correctly charged Asn-tRNA(Asn) or Gln-tRNA(Gln) through the transamidation of misacylated Asp-tRNA(Asn) or Glu-tRNA(Gln) in organisms which lack either or both of asparaginyl-tRNA or glutaminyl-tRNA synthetases. The reaction takes place in the presence of glutamine and ATP through an activated phospho-Asp-tRNA(Asn) or phospho-Glu-tRNA(Gln). This chain is Aspartyl/glutamyl-tRNA(Asn/Gln) amidotransferase subunit C, found in Nitratidesulfovibrio vulgaris (strain DSM 19637 / Miyazaki F) (Desulfovibrio vulgaris).